Consider the following 266-residue polypeptide: Shikimate dehydrogenase (NADP(+)) (266 aa).

Residues 16–18 (SKS) and Thr65 contribute to the shikimate site. The active-site Proton acceptor is Lys69. Shikimate is bound by residues Asn90 and Asp105. NADP(+)-binding positions include 128–132 (GAGGS) and Leu211. Tyr213 is a shikimate binding site. Gly233 contributes to the NADP(+) binding site.

This sequence belongs to the shikimate dehydrogenase family. As to quaternary structure, homodimer.

It catalyses the reaction shikimate + NADP(+) = 3-dehydroshikimate + NADPH + H(+). It participates in metabolic intermediate biosynthesis; chorismate biosynthesis; chorismate from D-erythrose 4-phosphate and phosphoenolpyruvate: step 4/7. Its function is as follows. Involved in the biosynthesis of the chorismate, which leads to the biosynthesis of aromatic amino acids. Catalyzes the reversible NADPH linked reduction of 3-dehydroshikimate (DHSA) to yield shikimate (SA). This chain is Shikimate dehydrogenase (NADP(+)), found in Helicobacter pylori (strain J99 / ATCC 700824) (Campylobacter pylori J99).